Reading from the N-terminus, the 223-residue chain is Large ribosomal subunit protein uL4 (223 aa).

The interval 49–106 (AAARQGTHSTKTRGEVSGGGRKPYRQKGTGRARQGSTRAPQFTGGGVVHGPKPRDYSQ) is disordered.

The protein belongs to the universal ribosomal protein uL4 family. Part of the 50S ribosomal subunit.

Functionally, one of the primary rRNA binding proteins, this protein initially binds near the 5'-end of the 23S rRNA. It is important during the early stages of 50S assembly. It makes multiple contacts with different domains of the 23S rRNA in the assembled 50S subunit and ribosome. Its function is as follows. Forms part of the polypeptide exit tunnel. This Mycobacterium bovis (strain ATCC BAA-935 / AF2122/97) protein is Large ribosomal subunit protein uL4.